A 311-amino-acid chain; its full sequence is Aspartate carbamoyltransferase catalytic subunit (311 aa).

The carbamoyl phosphate site is built by R55 and T56. K85 is an L-aspartate binding site. Carbamoyl phosphate contacts are provided by R106, H135, and Q138. L-aspartate-binding residues include R168 and R230. Residues L268 and P269 each contribute to the carbamoyl phosphate site.

Belongs to the aspartate/ornithine carbamoyltransferase superfamily. ATCase family. In terms of assembly, heterododecamer (2C3:3R2) of six catalytic PyrB chains organized as two trimers (C3), and six regulatory PyrI chains organized as three dimers (R2).

The enzyme catalyses carbamoyl phosphate + L-aspartate = N-carbamoyl-L-aspartate + phosphate + H(+). Its pathway is pyrimidine metabolism; UMP biosynthesis via de novo pathway; (S)-dihydroorotate from bicarbonate: step 2/3. In terms of biological role, catalyzes the condensation of carbamoyl phosphate and aspartate to form carbamoyl aspartate and inorganic phosphate, the committed step in the de novo pyrimidine nucleotide biosynthesis pathway. This Proteus mirabilis (strain HI4320) protein is Aspartate carbamoyltransferase catalytic subunit.